A 572-amino-acid chain; its full sequence is Acetyl-coenzyme A synthetase (572 aa).

Thr-260 contacts CoA. Residues 333–335 (GEP), 354–359 (DTWWMT), Asp-440, and Arg-455 each bind ATP. Ser-463 is a CoA binding site. Arg-466 provides a ligand contact to ATP. Mg(2+) is bound by residues Val-477, His-479, and Ile-482. Lys-524 is a binding site for CoA. Lys-549 carries the N6-acetyllysine modification.

This sequence belongs to the ATP-dependent AMP-binding enzyme family. In terms of assembly, interacts with FloT. Mg(2+) serves as cofactor. In terms of processing, acetylated. Deacetylation by the SIR2-homolog deacetylase activates the enzyme.

It is found in the cell membrane. It localises to the membrane raft. The catalysed reaction is acetate + ATP + CoA = acetyl-CoA + AMP + diphosphate. In terms of biological role, catalyzes the conversion of acetate into acetyl-CoA (AcCoA), an essential intermediate at the junction of anabolic and catabolic pathways. AcsA undergoes a two-step reaction. In the first half reaction, AcsA combines acetate with ATP to form acetyl-adenylate (AcAMP) intermediate. In the second half reaction, it can then transfer the acetyl group from AcAMP to the sulfhydryl group of CoA, forming the product AcCoA. Has a role in growth and sporulation on acetate. The sequence is that of Acetyl-coenzyme A synthetase (acsA) from Bacillus subtilis (strain 168).